The sequence spans 481 residues: Wax ester synthase/diacylglycerol acyltransferase 1 (481 aa).

Residues 1–185 (MKAEKVMERE…TTATKKPADS (185 aa)) are Cytoplasmic-facing. H147 (proton acceptor) is an active-site residue. Residues 186 to 206 (MAWWLFVGFWFMIRVTFTTIV) form a helical membrane-spanning segment. The Lumenal segment spans residues 207-481 (EFSKLMLTVC…QGEIFHKTEV (275 aa)).

The protein in the N-terminal section; belongs to the long-chain O-acyltransferase family. Expressed in flowers, siliques, top parts of stems, and leaves. Not found in roots, seeds and young seedlings.

It localises to the cell membrane. Its subcellular location is the endoplasmic reticulum membrane. The catalysed reaction is a long chain fatty alcohol + a fatty acyl-CoA = a wax ester + CoA. It carries out the reaction an acyl-CoA + a 1,2-diacyl-sn-glycerol = a triacyl-sn-glycerol + CoA. It functions in the pathway glycerolipid metabolism; triacylglycerol biosynthesis. It participates in lipid metabolism. Bifunctional wax ester synthase/diacylglycerol acyltransferase. Involved in cuticular wax biosynthesis. Required to reduce leaf water loss, especially during drought. In Arabidopsis thaliana (Mouse-ear cress), this protein is Wax ester synthase/diacylglycerol acyltransferase 1.